The primary structure comprises 356 residues: 5-formaminoimidazole-4-carboxamide-1-(beta)-D-ribofuranosyl 5'-monophosphate synthetase 1 (356 aa).

His-27 and Ser-94 together coordinate 5-amino-1-(5-phospho-beta-D-ribosyl)imidazole-4-carboxamide. Residues 101 to 333 (TENFAEMAVP…YADLIQEDLS (233 aa)) form the ATP-grasp domain. ATP is bound by residues 145 to 196 (PRDI…TRYY) and Glu-226. Residue Asn-255 coordinates 5-amino-1-(5-phospho-beta-D-ribosyl)imidazole-4-carboxamide. Residues Glu-293 and Glu-306 each contribute to the Mg(2+) site.

It belongs to the phosphohexose mutase family. It depends on Mg(2+) as a cofactor. Requires Mn(2+) as cofactor.

It carries out the reaction 5-amino-1-(5-phospho-beta-D-ribosyl)imidazole-4-carboxamide + formate + ATP = 5-formamido-1-(5-phospho-D-ribosyl)imidazole-4-carboxamide + ADP + phosphate. Its pathway is purine metabolism; IMP biosynthesis via de novo pathway; 5-formamido-1-(5-phospho-D-ribosyl)imidazole-4-carboxamide from 5-amino-1-(5-phospho-D-ribosyl)imidazole-4-carboxamide (formate route): step 1/1. Functionally, catalyzes the ATP- and formate-dependent formylation of 5-aminoimidazole-4-carboxamide-1-beta-d-ribofuranosyl 5'-monophosphate (AICAR) to 5-formaminoimidazole-4-carboxamide-1-beta-d-ribofuranosyl 5'-monophosphate (FAICAR) in the absence of folates. The sequence is that of 5-formaminoimidazole-4-carboxamide-1-(beta)-D-ribofuranosyl 5'-monophosphate synthetase 1 from Methanosarcina mazei (strain ATCC BAA-159 / DSM 3647 / Goe1 / Go1 / JCM 11833 / OCM 88) (Methanosarcina frisia).